The following is a 126-amino-acid chain: MTAIDVMWVGLGGGIGSLLRWWIGLSIGKVYKGNFPLGTFLINISGAFVIGYLSILFSVDWRDRYGDLMNAAVLTGILGGYTTFSSMQLDAAKLATARGRAIAAGYLIISVLVGLAAAAFGAWLAY.

4 helical membrane-spanning segments follow: residues 7–27, 37–57, 65–85, and 101–121; these read MWVG…GLSI, LGTF…SILF, YGDL…TTFS, and AIAA…AAFG. Positions 79 and 82 each coordinate Na(+).

Belongs to the fluoride channel Fluc/FEX (TC 1.A.43) family.

It is found in the cell inner membrane. It catalyses the reaction fluoride(in) = fluoride(out). Its activity is regulated as follows. Na(+) is not transported, but it plays an essential structural role and its presence is essential for fluoride channel function. Its function is as follows. Fluoride-specific ion channel. Important for reducing fluoride concentration in the cell, thus reducing its toxicity. The protein is Fluoride-specific ion channel FluC 2 of Yersinia pseudotuberculosis serotype I (strain IP32953).